Here is a 142-residue protein sequence, read N- to C-terminus: Large ribosomal subunit protein uL13 (142 aa).

This sequence belongs to the universal ribosomal protein uL13 family. As to quaternary structure, part of the 50S ribosomal subunit.

In terms of biological role, this protein is one of the early assembly proteins of the 50S ribosomal subunit, although it is not seen to bind rRNA by itself. It is important during the early stages of 50S assembly. This Shewanella amazonensis (strain ATCC BAA-1098 / SB2B) protein is Large ribosomal subunit protein uL13.